A 406-amino-acid chain; its full sequence is Peptidase T (406 aa).

Position 77 (H77) interacts with Zn(2+). D79 is an active-site residue. A Zn(2+)-binding site is contributed by D139. E173 serves as the catalytic Proton acceptor. Zn(2+)-binding residues include E174, D196, and H377.

This sequence belongs to the peptidase M20B family. Requires Zn(2+) as cofactor.

The protein resides in the cytoplasm. The enzyme catalyses Release of the N-terminal residue from a tripeptide.. Functionally, cleaves the N-terminal amino acid of tripeptides. The chain is Peptidase T from Parabacteroides distasonis (strain ATCC 8503 / DSM 20701 / CIP 104284 / JCM 5825 / NCTC 11152).